A 170-amino-acid polypeptide reads, in one-letter code: Cyclic pyranopterin monophosphate synthase (170 aa).

Residues 75 to 77 (MCH) and 115 to 116 (ME) contribute to the substrate site. Aspartate 130 is an active-site residue.

This sequence belongs to the MoaC family. Homohexamer; trimer of dimers.

The enzyme catalyses (8S)-3',8-cyclo-7,8-dihydroguanosine 5'-triphosphate = cyclic pyranopterin phosphate + diphosphate. It participates in cofactor biosynthesis; molybdopterin biosynthesis. Catalyzes the conversion of (8S)-3',8-cyclo-7,8-dihydroguanosine 5'-triphosphate to cyclic pyranopterin monophosphate (cPMP). The sequence is that of Cyclic pyranopterin monophosphate synthase from Bacillus velezensis (strain DSM 23117 / BGSC 10A6 / LMG 26770 / FZB42) (Bacillus amyloliquefaciens subsp. plantarum).